We begin with the raw amino-acid sequence, 537 residues long: Polyadenylate-binding protein 6 (537 aa).

RRM domains follow at residues G21–R99, A112–N188, T202–K279, and S304–R381. The tract at residues K503–Q537 is disordered. Basic and acidic residues-rich tracts occupy residues T506 to L517 and P525 to Q537.

Belongs to the polyadenylate-binding protein type-1 family. In terms of tissue distribution, expressed at low levels in leaves and young seedlings.

The protein resides in the cytoplasm. The protein localises to the nucleus. In terms of biological role, binds the poly(A) tail of mRNA. Appears to be an important mediator of the multiple roles of the poly(A) tail in mRNA biogenesis, stability and translation. The chain is Polyadenylate-binding protein 6 (PAB6) from Arabidopsis thaliana (Mouse-ear cress).